Reading from the N-terminus, the 79-residue chain is Raniseptin-9 (79 aa).

The signal sequence occupies residues methionine 1–cysteine 22. The propeptide occupies glutamate 23–glutamate 49. Residues arginine 27 to glutamate 46 are disordered. Positions glutamate 30–glutamate 44 are enriched in acidic residues.

The protein belongs to the frog skin active peptide (FSAP) family. Dermaseptin subfamily. In terms of tissue distribution, expressed by the skin glands.

Its subcellular location is the secreted. Functionally, has antibacterial activity. The chain is Raniseptin-9 from Boana raniceps (Chaco tree frog).